Consider the following 167-residue polypeptide: Small ribosomal subunit protein uS5 (167 aa).

Positions 11-74 (LQEKLIAVNR…EKARRNMINV (64 aa)) constitute an S5 DRBM domain.

The protein belongs to the universal ribosomal protein uS5 family. Part of the 30S ribosomal subunit. Contacts proteins S4 and S8.

Functionally, with S4 and S12 plays an important role in translational accuracy. Located at the back of the 30S subunit body where it stabilizes the conformation of the head with respect to the body. The sequence is that of Small ribosomal subunit protein uS5 from Klebsiella pneumoniae subsp. pneumoniae (strain ATCC 700721 / MGH 78578).